An 80-amino-acid polypeptide reads, in one-letter code: UPF0154 protein SZO_03240 (80 aa).

A helical membrane pass occupies residues 4–24; the sequence is AIWILLIIVALTAGLFGGIFI.

This sequence belongs to the UPF0154 family.

Its subcellular location is the cell membrane. The chain is UPF0154 protein SZO_03240 from Streptococcus equi subsp. zooepidemicus (strain H70).